A 219-amino-acid chain; its full sequence is Orotate phosphoribosyltransferase (219 aa).

Lys26 lines the 5-phospho-alpha-D-ribose 1-diphosphate pocket. Residue 34 to 35 coordinates orotate; the sequence is FF. 5-phospho-alpha-D-ribose 1-diphosphate-binding positions include 72-73, Arg98, Lys99, Lys102, His104, and 124-132; these read YK and DDVITAGTA. 2 residues coordinate orotate: Thr128 and Arg156.

It belongs to the purine/pyrimidine phosphoribosyltransferase family. PyrE subfamily. As to quaternary structure, homodimer. The cofactor is Mg(2+).

The enzyme catalyses orotidine 5'-phosphate + diphosphate = orotate + 5-phospho-alpha-D-ribose 1-diphosphate. It functions in the pathway pyrimidine metabolism; UMP biosynthesis via de novo pathway; UMP from orotate: step 1/2. In terms of biological role, catalyzes the transfer of a ribosyl phosphate group from 5-phosphoribose 1-diphosphate to orotate, leading to the formation of orotidine monophosphate (OMP). The polypeptide is Orotate phosphoribosyltransferase (Xylella fastidiosa (strain 9a5c)).